Here is a 677-residue protein sequence, read N- to C-terminus: Electrogenic aspartate/glutamate antiporter SLC25A12, mitochondrial (677 aa).

Position 2 is an N-acetylalanine (Ala2). The interval 2-294 (AVKVHTTKRG…TLADIERIAP (293 aa)) is regulatory N-terminal domain. The Mitochondrial intermembrane segment spans residues 2–329 (AVKVHTTKRG…WLQIAESAYR (328 aa)). 4 consecutive EF-hand domains span residues 40–85 (VQRY…SVLC), 86–121 (APDS…TIIH), 122–156 (HHIP…FLQE), and 157–192 (LQLE…IRSH). Positions 65, 67, 69, 71, and 76 each coordinate Ca(2+). The interval 295–310 (LAEGALPYNLAELQRQ) is linker loop domain. Residues 320–612 (WLQIAESAYR…RWFYIDFGGL (293 aa)) are carrier domain. Solcar repeat units lie at residues 324–416 (AESA…VRDK), 424–508 (IPLP…CKLL), and 516–604 (VGGI…LQRW). The helical transmembrane segment at 330–347 (FTLGSVAGAVGATAVYPI) threads the bilayer. The Mitochondrial matrix segment spans residues 348–390 (DLVKTRMQNQRGTGSVVGELMYKNSFDCFKKVLRYEGFFGLYR). Residues 391-410 (GLIPQLIGVAPEKAIKLTVN) form a helical membrane-spanning segment. At 411-433 (DFVRDKFTKRDGSIPLPAEILAG) the chain is on the mitochondrial intermembrane side. A helical transmembrane segment spans residues 434 to 447 (GCAGGSQVIFTNPL). At 448 to 482 (EIVKIRLQVAGEITTGPRVSALNVLQDLGLFGLYK) the chain is on the mitochondrial matrix side. The chain crosses the membrane as a helical span at residues 483-502 (GAKACFLRDIPFSAIYFPVY). At 503-521 (AHCKLLLADENGRVGGINL) the chain is on the mitochondrial intermembrane side. The helical transmembrane segment at 522 to 539 (LTAGALAGVPAASLVTPA) threads the bilayer. Over 540–578 (DVIKTRLQVAARAGQTTYSGVVDCFRKILREEGPSAFWK) the chain is Mitochondrial matrix. The helical transmembrane segment at 579–598 (GTAARVFRSSPQFGVTLVTY) threads the bilayer. The Mitochondrial intermembrane segment spans residues 599–677 (ELLQRWFYID…AQPKAAAAAQ (79 aa)). A C-terminal domain region spans residues 613 to 677 (KPSGSEPTPK…AQPKAAAAAQ (65 aa)).

This sequence belongs to the mitochondrial carrier (TC 2.A.29) family. In terms of assembly, homodimer (via N-terminus).

Its subcellular location is the mitochondrion inner membrane. The enzyme catalyses L-aspartate(in) + L-glutamate(out) + H(+)(out) = L-aspartate(out) + L-glutamate(in) + H(+)(in). It catalyses the reaction 3-sulfino-L-alanine(out) + L-glutamate(in) + H(+)(in) = 3-sulfino-L-alanine(in) + L-glutamate(out) + H(+)(out). The catalysed reaction is 3-sulfino-L-alanine(out) + L-aspartate(in) = 3-sulfino-L-alanine(in) + L-aspartate(out). In terms of biological role, mitochondrial electrogenic aspartate/glutamate antiporter that favors efflux of aspartate and entry of glutamate and proton within the mitochondria as part of the malate-aspartate shuttle. Also mediates the uptake of L-cysteinesulfinate (3-sulfino-L-alanine) by mitochondria in exchange of L-glutamate and proton. Can also exchange L-cysteinesulfinate with aspartate in their anionic form without any proton translocation. Lacks transport activity towards L-glutamine or gamma-aminobutyric acid (GABA). The protein is Electrogenic aspartate/glutamate antiporter SLC25A12, mitochondrial of Mus musculus (Mouse).